Reading from the N-terminus, the 529-residue chain is MASEIYRRLPMELPAQHLLASLALVGALLSVGYLLLRPAKYQLPLPPGPRGLPIIGNLHQAPKEKAWEVYKQWSDRYGPIMSVNNGGMITIIVSSHEVVKNFLEKNNAVFSSRPQLLVLERALYGFTTPALPYGEKWLKHRALRGAVLKPAMAVRYRGLQDLESKQLLRDLLYSEDFTQCMRRQAASLFLGIAYGNRFPEETPEIIDIDQAVAQLGGISESMFQGTGMLREFFPVLKYFPGYDKFLKQLDDVGERLANIYVRRFRDGLSTPAWNWAKEYSKRPEAQGMGELELSFCIGSTYQASLTPYEILRIILLAAICHPEEKARLQKEIDLVVGKDNLPGWEHKDRIQFVQAFIYEALRWHAFSPLGAPRAVSRDIEYKGYFIPKGATLVLNQWAMDHDENVYDNPFTFRPQRWIDNPDLPHVIFGFGLRGCPGQHLARDHLFINTARLFWAFNFGNAYENGKKVELDLDELMQPRGGGSAFNQVPSFKASVIIRSSERRQIVENEWDAVEKDEQKILAEAMPLPE.

A helical membrane pass occupies residues 13–35; that stretch reads LPAQHLLASLALVGALLSVGYLL. Cys-435 contacts heme.

This sequence belongs to the cytochrome P450 family. Heme serves as cofactor.

Its subcellular location is the membrane. The enzyme catalyses okaramine C + 2 reduced [NADPH--hemoprotein reductase] + 2 O2 = okaramine A + 2 oxidized [NADPH--hemoprotein reductase] + 4 H2O + 2 H(+). It participates in alkaloid biosynthesis. Its function is as follows. Cytochrome P450 monooxygenase; part of the gene cluster that mediates the biosynthesis of okaramine B, a prenylated indole alkaloid that possesses an unusual octacyclic ring system, including a four-membered azetidine ring and an eight-membered azocine ring, and that exhibits insecticidal activity against silkworm larvae. Within the pathway, okaD likely catalyzes a key step in forming the eight-membered ring of okaramine A using as substrate okaramine C. The biosynthesis begins with the NRPS okaA that condenses two tryptophan molecules into cyclo(L-Trp-L-Trp). Prenylation by the prenyltransferase okaC then leads to the formation of cyclo(N8-(alpha,alpha-dimethylallyl)-L-Trp-6a-(alpha,alpha-dime-thylallyl)-L-Trp). This is followed by indole 2,3-epoxidation by the FAD-dependent monooxygenase okaB to facilitate the formation of the hexahydropyrrolo[2,3-b]indole (HPI) moiety of okaramine C. The cytochrome P450 monooxygenase okaD then likely catalyzes formation of the eight-membered ring of okaramine A. The dioxygenase okaE further forms the unusual 2-dimethyl-3-methyl-azetidine ring to yield 12-deshydroxyl okaramine E, as well as the hydroxylation of 12-deshydroxyl okaramine E to produce okaramine E. The cytochrome P450 monoxygenase okaG converts 12-deshydroxyl okaramine E into 3-desmethyl okaramine B which is further methylated by the methyltransferase okaF into okaramine B. In a shunt pathway, okaG and okaF together are also able to convert okaramine E into okaramine D. Okaramine H is produced by nonenzymatic conversion from okaramine A. This Penicillium ochrochloron protein is Cytochrome P450 monooxygenase okaD.